The following is a 164-amino-acid chain: Ferredoxin-type protein NapF (164 aa).

4Fe-4S ferredoxin-type domains lie at 28–57 (GDESHFLTHCTRCDACINACENNILQRGAG), 58–89 (GYPSVNFKNNECSFCYACAQACPESLFSPRHT), and 132–161 (YQPQLNSQLCNGCGACAASCPVSAITAEYL). Cys-37, Cys-40, Cys-43, Cys-47, Cys-69, Cys-72, Cys-75, Cys-79, Cys-141, Cys-144, Cys-147, and Cys-151 together coordinate [4Fe-4S] cluster.

It belongs to the NapF family. As to quaternary structure, interacts with the cytoplasmic NapA precursor. The cofactor is [4Fe-4S] cluster.

It localises to the cytoplasm. In terms of biological role, could be involved in the maturation of NapA, the catalytic subunit of the periplasmic nitrate reductase, before its export into the periplasm. This is Ferredoxin-type protein NapF from Escherichia coli O157:H7.